A 346-amino-acid chain; its full sequence is Cyclin-dependent kinase 20 (346 aa).

The region spanning 4-288 (YCILGRIGEG…ASQALLHQYF (285 aa)) is the Protein kinase domain. ATP-binding positions include 10–18 (IGEGAHGIV) and Lys-33. The active-site Proton acceptor is the Asp-127. Residues 298 to 324 (SELPIPQRPGGPTPKAHPGPPHVHDFH) form a disordered region. Residues 303 to 318 (PQRPGGPTPKAHPGPP) are compositionally biased toward pro residues.

It belongs to the protein kinase superfamily. CMGC Ser/Thr protein kinase family. CDC2/CDKX subfamily. In terms of assembly, monomer. Interacts with TBC1D32 and MAK.

The protein resides in the nucleus. It localises to the cytoplasm. Its subcellular location is the cell projection. The protein localises to the cilium. It carries out the reaction L-seryl-[protein] + ATP = O-phospho-L-seryl-[protein] + ADP + H(+). It catalyses the reaction L-threonyl-[protein] + ATP = O-phospho-L-threonyl-[protein] + ADP + H(+). In terms of biological role, required for high-level Shh responses in the developing neural tube. Together with TBC1D32, controls the structure of the primary cilium by coordinating assembly of the ciliary membrane and axoneme, allowing GLI2 to be properly activated in response to SHH signaling. Involved in cell growth. Activates CDK2, a kinase involved in the control of the cell cycle, by phosphorylating residue 'Thr-160'. The polypeptide is Cyclin-dependent kinase 20 (Cdk20) (Rattus norvegicus (Rat)).